The primary structure comprises 129 residues: Small ribosomal subunit protein uS11 (129 aa).

It belongs to the universal ribosomal protein uS11 family. In terms of assembly, part of the 30S ribosomal subunit. Interacts with proteins S7 and S18. Binds to IF-3.

In terms of biological role, located on the platform of the 30S subunit, it bridges several disparate RNA helices of the 16S rRNA. Forms part of the Shine-Dalgarno cleft in the 70S ribosome. This chain is Small ribosomal subunit protein uS11, found in Stenotrophomonas maltophilia (strain R551-3).